We begin with the raw amino-acid sequence, 197 residues long: Imidazoleglycerol-phosphate dehydratase (197 aa).

This sequence belongs to the imidazoleglycerol-phosphate dehydratase family.

It is found in the cytoplasm. The enzyme catalyses D-erythro-1-(imidazol-4-yl)glycerol 3-phosphate = 3-(imidazol-4-yl)-2-oxopropyl phosphate + H2O. It functions in the pathway amino-acid biosynthesis; L-histidine biosynthesis; L-histidine from 5-phospho-alpha-D-ribose 1-diphosphate: step 6/9. This chain is Imidazoleglycerol-phosphate dehydratase, found in Azorhizobium caulinodans (strain ATCC 43989 / DSM 5975 / JCM 20966 / LMG 6465 / NBRC 14845 / NCIMB 13405 / ORS 571).